We begin with the raw amino-acid sequence, 273 residues long: E3 ubiquitin-protein ligase SDIR1 (273 aa).

The Cytoplasmic portion of the chain corresponds to 1–33 (MSFVFRGSRGDLESGFSGGFLPERRAMRVHGAR). A helical membrane pass occupies residues 34 to 54 (PVNSNSLAFLVTVLLLFMILN). Residues 55–56 (SH) are Lumenal-facing. The chain crosses the membrane as a helical span at residues 57–77 (QMPPNFLLWLVLGVFLMATTL). The Cytoplasmic segment spans residues 78–273 (RMYATCQQLQ…EIDDDASDMV (196 aa)). Residues 211–252 (CSVCLEQVTVGEIVRTLPCLHQFHAGCIDPWLRQQGTCPVCK) form an RING-type; atypical zinc finger.

As to quaternary structure, interacts with ATP1/SDIRIP1. As to expression, ubiquitous.

The protein resides in the endoplasmic reticulum membrane. It carries out the reaction S-ubiquitinyl-[E2 ubiquitin-conjugating enzyme]-L-cysteine + [acceptor protein]-L-lysine = [E2 ubiquitin-conjugating enzyme]-L-cysteine + N(6)-ubiquitinyl-[acceptor protein]-L-lysine.. In terms of biological role, E3 ubiquitin-protein ligase that acts as a positive regulator of abscisic acid-related stress signal transduction. Interacts with and ubiquitinates ATP1/SDIRIP1 to modulate ATP1/SDIRIP1 stability through the 26S proteasome pathway. Regulates abscisic acid (ABA) and salt stress responses by negatively affecting ATP1/SDIRIP1 stability. The SDIR1-ATP1/SDIRIP1 complex plays an important role in ABA signaling through the ubiquitination pathway. The protein is E3 ubiquitin-protein ligase SDIR1 of Arabidopsis thaliana (Mouse-ear cress).